A 122-amino-acid polypeptide reads, in one-letter code: Small ribosomal subunit protein uS13 (122 aa).

A disordered region spans residues 99-122 (RGQRTHTNARTRKGPAKAIAGKKK).

Belongs to the universal ribosomal protein uS13 family. As to quaternary structure, part of the 30S ribosomal subunit. Forms a loose heterodimer with protein S19. Forms two bridges to the 50S subunit in the 70S ribosome.

Its function is as follows. Located at the top of the head of the 30S subunit, it contacts several helices of the 16S rRNA. In the 70S ribosome it contacts the 23S rRNA (bridge B1a) and protein L5 of the 50S subunit (bridge B1b), connecting the 2 subunits; these bridges are implicated in subunit movement. Contacts the tRNAs in the A and P-sites. The chain is Small ribosomal subunit protein uS13 from Rhodopseudomonas palustris (strain HaA2).